We begin with the raw amino-acid sequence, 84 residues long: Small ribosomal subunit protein bS16 (84 aa).

Belongs to the bacterial ribosomal protein bS16 family.

This chain is Small ribosomal subunit protein bS16, found in Methylococcus capsulatus (strain ATCC 33009 / NCIMB 11132 / Bath).